Consider the following 464-residue polypeptide: Sensor histidine kinase Hik34 (464 aa).

Positions 235 to 449 constitute a Histidine kinase domain; the sequence is ALTHEVRTPL…ILTIYLKCEQ (215 aa). Phosphohistidine; by autocatalysis is present on His238.

When expressed in E.coli autophosphorylates at 18 to 30 degrees Celsius; less phosphorylation occurs at 36 and none occurs at 42 or 48 degrees Celsius.

The catalysed reaction is ATP + protein L-histidine = ADP + protein N-phospho-L-histidine.. Member of a two-component system Hik34/Rre1, controlling expression of at least 20 genes in response to hyperosmotic stress (0.5 M sorbitol) or salt (0.5 M NaCl). Represses expression of heat shock genes under normal growth conditions. Required for survival of long-term heat shock exposure. This is Sensor histidine kinase Hik34 from Synechocystis sp. (strain ATCC 27184 / PCC 6803 / Kazusa).